Here is a 149-residue protein sequence, read N- to C-terminus: Large ribosomal subunit protein bL9 (149 aa).

The protein belongs to the bacterial ribosomal protein bL9 family.

In terms of biological role, binds to the 23S rRNA. The sequence is that of Large ribosomal subunit protein bL9 from Xylella fastidiosa (strain 9a5c).